An 821-amino-acid polypeptide reads, in one-letter code: Serine/threonine-protein kinase CTR1 (821 aa).

Disordered regions lie at residues 1–76 (MEMP…LNNQ) and 481–502 (NPGGENDALAENGGGSLPPSAN). Residues 14 to 25 (SQFSDDQVSVSV) show a composition bias toward low complexity. Positions 35–49 (SLSSENRSNHNSGNT) are enriched in polar residues. A Protein kinase domain is found at 551–809 (LNIKEKIGAG…TIMDLLRPLI (259 aa)). ATP is bound by residues 557–565 (IGAGSFGTV) and Lys578. The Proton acceptor role is filled by Asp676.

The protein belongs to the protein kinase superfamily. TKL Ser/Thr protein kinase family. RAF subfamily. As to quaternary structure, interacts with EIN2 (via C-terminus). In terms of tissue distribution, expressed in both seedlings and adult plants.

It catalyses the reaction L-seryl-[protein] + ATP = O-phospho-L-seryl-[protein] + ADP + H(+). The enzyme catalyses L-threonyl-[protein] + ATP = O-phospho-L-threonyl-[protein] + ADP + H(+). Kinase activity is inhibited by C24:1-ceramide during hypoxia (e.g. submergences). Functionally, acts as a negative regulator in the ethylene response pathway. Phosphorylates the cytosolic C-terminal domain of EIN2, preventing the signaling in the absence of ethylene. Interacts with C24:1-ceramide upon hypoxic conditions (e.g. submergences) to in turn regulate EIN2 endoplasmic reticulum (ER)-to-nucleus translocation and EIN3 stabilization. The sequence is that of Serine/threonine-protein kinase CTR1 from Arabidopsis thaliana (Mouse-ear cress).